The following is a 229-amino-acid chain: Cytochrome c oxidase subunit 2 (229 aa).

The Mitochondrial intermembrane segment spans residues 1–14 (MPTPNQTNFQDAAS). Residues 15–45 (PLMEELTHFHDHTLMIVFMISLLVLYILLSM) form a helical membrane-spanning segment. Residues 46–59 (LSTKLTHTNTANAQ) are Mitochondrial matrix-facing. Residues 60-87 (QAEMVWTILPAIILITIALPSLQILYMM) form a helical membrane-spanning segment. Over 88–229 (DEINKPHMTI…DLWLAMIDTL (142 aa)) the chain is Mitochondrial intermembrane. Cu cation contacts are provided by His161, Cys196, Glu198, Cys200, His204, and Met207. Glu198 provides a ligand contact to Mg(2+).

Belongs to the cytochrome c oxidase subunit 2 family. In terms of assembly, component of the cytochrome c oxidase (complex IV, CIV), a multisubunit enzyme composed of 14 subunits. The complex is composed of a catalytic core of 3 subunits MT-CO1, MT-CO2 and MT-CO3, encoded in the mitochondrial DNA, and 11 supernumerary subunits COX4I, COX5A, COX5B, COX6A, COX6B, COX6C, COX7A, COX7B, COX7C, COX8 and NDUFA4, which are encoded in the nuclear genome. The complex exists as a monomer or a dimer and forms supercomplexes (SCs) in the inner mitochondrial membrane with NADH-ubiquinone oxidoreductase (complex I, CI) and ubiquinol-cytochrome c oxidoreductase (cytochrome b-c1 complex, complex III, CIII), resulting in different assemblies (supercomplex SCI(1)III(2)IV(1) and megacomplex MCI(2)III(2)IV(2)). Found in a complex with TMEM177, COA6, COX18, COX20, SCO1 and SCO2. Interacts with TMEM177 in a COX20-dependent manner. Interacts with COX20. Interacts with COX16. Cu cation is required as a cofactor.

The protein resides in the mitochondrion inner membrane. The catalysed reaction is 4 Fe(II)-[cytochrome c] + O2 + 8 H(+)(in) = 4 Fe(III)-[cytochrome c] + 2 H2O + 4 H(+)(out). Functionally, component of the cytochrome c oxidase, the last enzyme in the mitochondrial electron transport chain which drives oxidative phosphorylation. The respiratory chain contains 3 multisubunit complexes succinate dehydrogenase (complex II, CII), ubiquinol-cytochrome c oxidoreductase (cytochrome b-c1 complex, complex III, CIII) and cytochrome c oxidase (complex IV, CIV), that cooperate to transfer electrons derived from NADH and succinate to molecular oxygen, creating an electrochemical gradient over the inner membrane that drives transmembrane transport and the ATP synthase. Cytochrome c oxidase is the component of the respiratory chain that catalyzes the reduction of oxygen to water. Electrons originating from reduced cytochrome c in the intermembrane space (IMS) are transferred via the dinuclear copper A center (CU(A)) of subunit 2 and heme A of subunit 1 to the active site in subunit 1, a binuclear center (BNC) formed by heme A3 and copper B (CU(B)). The BNC reduces molecular oxygen to 2 water molecules using 4 electrons from cytochrome c in the IMS and 4 protons from the mitochondrial matrix. The protein is Cytochrome c oxidase subunit 2 (MT-CO2) of Pelomedusa subrufa (African side-necked turtle).